The sequence spans 446 residues: N-succinylarginine dihydrolase (446 aa).

Substrate contacts are provided by residues 19 to 28, Asn110, and 137 to 138; these read AGLSFGNVAS and HR. Glu174 is an active-site residue. Arg213 contributes to the substrate binding site. The active site involves His249. The substrate site is built by Asp251 and Asn364. The active-site Nucleophile is the Cys370.

The protein belongs to the succinylarginine dihydrolase family. Homodimer.

It catalyses the reaction N(2)-succinyl-L-arginine + 2 H2O + 2 H(+) = N(2)-succinyl-L-ornithine + 2 NH4(+) + CO2. Its pathway is amino-acid degradation; L-arginine degradation via AST pathway; L-glutamate and succinate from L-arginine: step 2/5. In terms of biological role, catalyzes the hydrolysis of N(2)-succinylarginine into N(2)-succinylornithine, ammonia and CO(2). The sequence is that of N-succinylarginine dihydrolase from Burkholderia cenocepacia (strain HI2424).